The following is a 95-amino-acid chain: Signal recognition particle 19 kDa protein (95 aa).

This sequence belongs to the SRP19 family. Part of the signal recognition particle protein translocation system, which is composed of SRP and FtsY. Archaeal SRP consists of a 7S RNA molecule of 300 nucleotides and two protein subunits: SRP54 and SRP19.

It localises to the cytoplasm. Involved in targeting and insertion of nascent membrane proteins into the cytoplasmic membrane. Binds directly to 7S RNA and mediates binding of the 54 kDa subunit of the SRP. In Methanococcoides burtonii (strain DSM 6242 / NBRC 107633 / OCM 468 / ACE-M), this protein is Signal recognition particle 19 kDa protein.